A 20-amino-acid polypeptide reads, in one-letter code: Large ribosomal subunit protein bL31 (20 aa).

Residues X16 and X18 each coordinate Zn(2+).

This sequence belongs to the bacterial ribosomal protein bL31 family. Type A subfamily. Part of the 50S ribosomal subunit. The cofactor is Zn(2+).

Functionally, binds the 23S rRNA. This Ectopseudomonas mendocina (Pseudomonas mendocina) protein is Large ribosomal subunit protein bL31 (rpmE).